Here is a 328-residue protein sequence, read N- to C-terminus: Serine/threonine-protein phosphatase PP2A-2 catalytic subunit (328 aa).

Mn(2+) contacts are provided by D76, H78, D104, and N136. Residue H137 is the Proton donor of the active site. Positions 186 and 260 each coordinate Mn(2+). A Leucine methyl ester modification is found at L328.

It belongs to the PPP phosphatase family. PP-2A subfamily. It depends on Mn(2+) as a cofactor.

The catalysed reaction is O-phospho-L-seryl-[protein] + H2O = L-seryl-[protein] + phosphate. It catalyses the reaction O-phospho-L-threonyl-[protein] + H2O = L-threonyl-[protein] + phosphate. This Blumeria hordei (Barley powdery mildew) protein is Serine/threonine-protein phosphatase PP2A-2 catalytic subunit (PP2A-2).